The chain runs to 167 residues: L-alanine exporter AlaE (167 aa).

4 helical membrane-spanning segments follow: residues 25-45, 50-70, 105-125, and 129-149; these read GTEFLADTVALILFFTTTGII, IAGMSWDQVLHARLIGAALMI, FQVPIYAAIIAFSGATGGGLV, and LGAALMMLFLGRPYGAFLNWV.

This sequence belongs to the AlaE exporter family.

The protein resides in the cell inner membrane. Functionally, exports L-alanine. The protein is L-alanine exporter AlaE of Pantoea sp. (strain At-9b).